We begin with the raw amino-acid sequence, 1853 residues long: DNA-directed RNA polymerase II subunit RPB1 (1853 aa).

Residues C66, C69, C76, H79, C106, C109, C149, and C177 each coordinate Zn(2+). A lid loop region spans residues 256–268 (PAVVTFGSAKNQD). The tract at residues 314 to 331 (NCIPGLPTATQKGGRPLK) is rudder loop. 3 residues coordinate Mg(2+): D489, D491, and D493. Positions 827–839 (PSEFFFHAMGGRE) are bridging helix. A Glycyl lysine isopeptide (Lys-Gly) (interchain with G-Cter in ubiquitin) cross-link involves residue K1260. Disordered stretches follow at residues 1520–1568 (PWSP…PRTP) and 1589–1853 (SPHY…DPQN). Composition is skewed to low complexity over residues 1589–1811 (SPHY…TPSP) and 1821–1853 (YSPSSPTYSPSSPTYSPASPSYSPSSPTYDPQN). Repeat copies occupy residues 1592-1598 (YSPTSPS), 1599-1605 (YSPTSPA), 1616-1622 (YSPTSPS), 1623-1629 (YSPTSPS), 1630-1636 (YSPTSPS), 1637-1643 (YSPTSPS), 1644-1650 (YSPTSPS), 1651-1657 (YSPTSPS), 1658-1664 (YSPTSPS), 1665-1671 (YSPTSPS), 1679-1685 (YSPTSPT), 1686-1692 (YSPTSPT), 1693-1699 (YSPTSPT), 1700-1706 (YSPTSPT), 1707-1713 (YSPTSPS), 1717-1723 (YSPSSPK), 1724-1730 (YSPSSPT), 1731-1737 (YSPTSPS), 1752-1758 (YSPSSPT), 1759-1765 (YTPSSPT), 1779-1785 (YSPTSPT), 1786-1792 (YSPTSPS), 1800-1806 (YSPTSPT), 1821-1827 (YSPSSPT), 1828-1834 (YSPSSPT), and 1842-1848 (YSPSSPT). Residues 1592-1848 (YSPTSPSYSP…SPSYSPSSPT (257 aa)) are C-terminal domain (CTD); 26 X 7 AA approximate tandem repeats of Y-[ST]-P-[ST]-S-P-[AGKNQRST].

It belongs to the RNA polymerase beta' chain family. As to quaternary structure, component of the RNA polymerase II (Pol II) complex consisting of 12 subunits. Interacts with sig-7. The tandem 7 residues repeats in the C-terminal domain (CTD) can be highly phosphorylated. The phosphorylation activates Pol II. Phosphorylation occurs mainly at residues 'Ser-2' and 'Ser-5' of the heptapeptide repeat and starts at the 3- to 4-cell embryonic stage. This phosphorylation also occurs in the early stages of oocyte development and is not detected in oocytes arrested at the meiotic diakinesis stage. In the somatic lineage, phosphorylation at 'Ser-2' is mediated by cdk-12 downstream of cdk-9 whereas in the germline lineage cdk-12 phosphorylates 'Ser-2' independently of cdk-9. Phosphorylation is likely mediated by cdk-7. May be dephosphorylated by fcp-1 in diakinetic oocytes and in 1-cell and 2-cell embryos. Dephosphorylated at 'Ser-5' of the heptapeptide repeat by ssup-72. The phosphorylation state is believed to result from the balanced action of site-specific CTD kinases and phosphatase, and a 'CTD code' that specifies the position of Pol II within the transcription cycle has been proposed. Post-translationally, following transcription stress, the elongating form of RNA polymerase II (RNA pol IIo) is polyubiquitinated via 'Lys-63'-linkages on Lys-1260 at DNA damage sites without leading to degradation: ubiquitination promotes RNA pol IIo backtracking to allow access by the transcription-coupled nucleotide excision repair (TC-NER) machinery. Subsequent DEF1-dependent polyubiquitination by the elongin complex via 'Lys-48'-linkages may lead to proteasome-mediated degradation; presumably at stalled RNA pol II where TC-NER has failed, to halt global transcription and enable 'last resort' DNA repair pathways.

It is found in the nucleus. The protein localises to the chromosome. It carries out the reaction RNA(n) + a ribonucleoside 5'-triphosphate = RNA(n+1) + diphosphate. DNA-dependent RNA polymerase catalyzes the transcription of DNA into RNA using the four ribonucleoside triphosphates as substrates. Largest and catalytic component of RNA polymerase II which synthesizes mRNA precursors and many functional non-coding RNAs. Forms the polymerase active center together with the second largest subunit. Pol II is the central component of the basal RNA polymerase II transcription machinery. It is composed of mobile elements that move relative to each other. RPB1 is part of the core element with the central large cleft, the clamp element that moves to open and close the cleft and the jaws that are thought to grab the incoming DNA template. At the start of transcription, a single-stranded DNA template strand of the promoter is positioned within the central active site cleft of Pol II. A bridging helix emanates from RPB1 and crosses the cleft near the catalytic site and is thought to promote translocation of Pol II by acting as a ratchet that moves the RNA-DNA hybrid through the active site by switching from straight to bent conformations at each step of nucleotide addition. During transcription elongation, Pol II moves on the template as the transcript elongates. Elongation is influenced by the phosphorylation status of the C-terminal domain (CTD) of Pol II largest subunit (RPB1), which serves as a platform for assembly of factors that regulate transcription initiation, elongation, termination and mRNA processing. Involved in the transcription of several genes including those involved in embryogenesis. This chain is DNA-directed RNA polymerase II subunit RPB1, found in Caenorhabditis briggsae.